Here is a 506-residue protein sequence, read N- to C-terminus: Histidine ammonia-lyase (506 aa).

Residues 143–145 (ASG) constitute a cross-link (5-imidazolinone (Ala-Gly)). Ser144 carries the 2,3-didehydroalanine (Ser) modification.

Belongs to the PAL/histidase family. Contains an active site 4-methylidene-imidazol-5-one (MIO), which is formed autocatalytically by cyclization and dehydration of residues Ala-Ser-Gly.

Its subcellular location is the cytoplasm. The enzyme catalyses L-histidine = trans-urocanate + NH4(+). It functions in the pathway amino-acid degradation; L-histidine degradation into L-glutamate; N-formimidoyl-L-glutamate from L-histidine: step 1/3. In Salmonella typhi, this protein is Histidine ammonia-lyase.